The sequence spans 372 residues: Hydrogenase-1 small chain (372 aa).

Residues 1-45 constitute a signal peptide (tat-type signal); it reads MNNEETFYQAMRRQGVTRRSFLKYCSLAATSLGLGAGMAPKIAWA. The Periplasmic segment spans residues 46–325; sequence LENKPRIPVV…PQMGTHSTAD (280 aa). [4Fe-4S] cluster-binding residues include cysteine 62, cysteine 65, cysteine 160, cysteine 194, histidine 232, cysteine 235, cysteine 260, and cysteine 266. Residues cysteine 275, cysteine 294, and cysteine 297 each coordinate [3Fe-4S] cluster. The helical transmembrane segment at 326–346 threads the bilayer; it reads TVGLTALGVVAAAVGVHAVAS. The tract at residues 346–372 is disordered; it reads SSVDQRRRHNQQPTETEHQPGNEDKQA. Over 347-372 the chain is Cytoplasmic; it reads SVDQRRRHNQQPTETEHQPGNEDKQA. Over residues 360 to 372 the composition is skewed to basic and acidic residues; it reads ETEHQPGNEDKQA.

This sequence belongs to the [NiFe]/[NiFeSe] hydrogenase small subunit family. Heterodimer of a large and a small subunit. [4Fe-4S] cluster serves as cofactor. [3Fe-4S] cluster is required as a cofactor. Post-translationally, predicted to be exported by the Tat system. The position of the signal peptide cleavage has not been experimentally proven.

The protein localises to the cell inner membrane. It carries out the reaction H2 + A = AH2. In terms of biological role, this is one of three S.flexneri hydrogenases synthesized in response to different physiological conditions. HYD1 is believed to have a role in hydrogen cycling during fermentative growth. This chain is Hydrogenase-1 small chain (hyaA), found in Shigella flexneri.